Reading from the N-terminus, the 980-residue chain is Putative helicase 087L (980 aa).

The Helicase ATP-binding domain maps to 59–246 (INPHTLYDGV…IDLFNLILRT (188 aa)). 72 to 79 (HEMGTGKT) contributes to the ATP binding site. Positions 189–192 (DEAH) match the DEAH box motif. Positions 389 to 546 (RLSFVFSEFV…SIDLHMYEIA (158 aa)) constitute a Helicase C-terminal domain.

It belongs to the IIV-6 022L family. SNF2/RAD54 helicase subfamily.

This is Putative helicase 087L from Invertebrate iridescent virus 3 (IIV-3).